Here is a 344-residue protein sequence, read N- to C-terminus: DNA polymerase IV (344 aa).

In terms of domain architecture, UmuC spans 2–183 (IMLIDFDYFF…IKINDIPGIG (182 aa)). Residues Asp6 and Asp105 each contribute to the Mg(2+) site. Residue Glu106 is part of the active site.

It belongs to the DNA polymerase type-Y family. In terms of assembly, monomer. Mg(2+) serves as cofactor.

It localises to the cytoplasm. It carries out the reaction DNA(n) + a 2'-deoxyribonucleoside 5'-triphosphate = DNA(n+1) + diphosphate. Its function is as follows. Poorly processive, error-prone DNA polymerase involved in untargeted mutagenesis. Copies undamaged DNA at stalled replication forks, which arise in vivo from mismatched or misaligned primer ends. These misaligned primers can be extended by PolIV. Exhibits no 3'-5' exonuclease (proofreading) activity. May be involved in translesional synthesis. In Picrophilus torridus (strain ATCC 700027 / DSM 9790 / JCM 10055 / NBRC 100828 / KAW 2/3), this protein is DNA polymerase IV.